The following is a 333-amino-acid chain: Phosphoribosylformylglycinamidine cyclo-ligase (333 aa).

This sequence belongs to the AIR synthase family.

It is found in the cytoplasm. The enzyme catalyses 2-formamido-N(1)-(5-O-phospho-beta-D-ribosyl)acetamidine + ATP = 5-amino-1-(5-phospho-beta-D-ribosyl)imidazole + ADP + phosphate + H(+). The protein operates within purine metabolism; IMP biosynthesis via de novo pathway; 5-amino-1-(5-phospho-D-ribosyl)imidazole from N(2)-formyl-N(1)-(5-phospho-D-ribosyl)glycinamide: step 2/2. This Clostridium perfringens (strain 13 / Type A) protein is Phosphoribosylformylglycinamidine cyclo-ligase.